A 292-amino-acid chain; its full sequence is Ribosomal RNA small subunit methyltransferase A (292 aa).

The S-adenosyl-L-methionine site is built by N29, L31, G56, E77, D102, and N127.

Belongs to the class I-like SAM-binding methyltransferase superfamily. rRNA adenine N(6)-methyltransferase family. RsmA subfamily.

It localises to the cytoplasm. It catalyses the reaction adenosine(1518)/adenosine(1519) in 16S rRNA + 4 S-adenosyl-L-methionine = N(6)-dimethyladenosine(1518)/N(6)-dimethyladenosine(1519) in 16S rRNA + 4 S-adenosyl-L-homocysteine + 4 H(+). Its function is as follows. Specifically dimethylates two adjacent adenosines (A1518 and A1519) in the loop of a conserved hairpin near the 3'-end of 16S rRNA in the 30S particle. May play a critical role in biogenesis of 30S subunits. The chain is Ribosomal RNA small subunit methyltransferase A from Bacillus subtilis (strain 168).